We begin with the raw amino-acid sequence, 354 residues long: Glycerol-1-phosphate dehydrogenase [NAD(P)+] (354 aa).

Residues 103–107 (GRAVD) and 125–128 (TAAS) contribute to the NAD(+) site. Asp-130 serves as a coordination point for substrate. Ser-134 contributes to the NAD(+) binding site. Residue Asp-176 participates in substrate binding. Asp-176 and His-255 together coordinate Zn(2+). His-259 contributes to the substrate binding site. Residue His-271 coordinates Zn(2+).

The protein belongs to the glycerol-1-phosphate dehydrogenase family. As to quaternary structure, homodimer. It depends on Zn(2+) as a cofactor.

It localises to the cytoplasm. The catalysed reaction is sn-glycerol 1-phosphate + NAD(+) = dihydroxyacetone phosphate + NADH + H(+). It carries out the reaction sn-glycerol 1-phosphate + NADP(+) = dihydroxyacetone phosphate + NADPH + H(+). It functions in the pathway membrane lipid metabolism; glycerophospholipid metabolism. In terms of biological role, catalyzes the NAD(P)H-dependent reduction of dihydroxyacetonephosphate (DHAP or glycerone phosphate) to glycerol 1-phosphate (G1P). The G1P thus generated is used as the glycerophosphate backbone of phospholipids in the cellular membranes of Archaea. This Cenarchaeum symbiosum (strain A) protein is Glycerol-1-phosphate dehydrogenase [NAD(P)+].